Reading from the N-terminus, the 465-residue chain is MKLYNTLTMTKEEFEPLEEGKVKMYVCGPTVYDFIHIGNARPLIVFDTLRRYFEYKGYEVIYIQNFTDVEDKMINRANKEGITVFELAERFIQEYYKDADRLNVRRATKSPRATEEIEDMIALIQRLIDKGYAYVVDGDVYFRTRKFAEYGKLSHKNIEDLMAGARVDPSEKKEDPLDFALWKAKKEGEPAWNSPWGEGRPGWHIECSVMAMKYLGQTIDIHAGGQDLIFPHHENEIAQSEAATGKPFARFWLHNGYVNINNEKMSKSLGNFFTVREIIEKYHPEALRLFMLQAHYRKPLNFSIDLIEQAEVALKRIYTCYENLEFLIQNAASSSENDDKLKAAIEELKAKFIDAMEDDLNTAEATGYLFEMVREINTHANSCSKETLTFAKDILKELCSILGILEQYSAKEEAIPQEILELVEKRNQARKAKNFLEADRIRDELKSLGYIVLDTPQGTKVERIK.

Cysteine 27 contributes to the Zn(2+) binding site. A 'HIGH' region motif is present at residues proline 29 to asparagine 39. Cysteine 207, histidine 232, and glutamate 236 together coordinate Zn(2+). A 'KMSKS' region motif is present at residues lysine 264–serine 268. Position 267 (lysine 267) interacts with ATP.

The protein belongs to the class-I aminoacyl-tRNA synthetase family. As to quaternary structure, monomer. The cofactor is Zn(2+).

The protein localises to the cytoplasm. The enzyme catalyses tRNA(Cys) + L-cysteine + ATP = L-cysteinyl-tRNA(Cys) + AMP + diphosphate. The chain is Cysteine--tRNA ligase from Caldicellulosiruptor saccharolyticus (strain ATCC 43494 / DSM 8903 / Tp8T 6331).